A 508-amino-acid polypeptide reads, in one-letter code: 2,3-bisphosphoglycerate-independent phosphoglycerate mutase (508 aa).

2 residues coordinate Mn(2+): Asp9 and Ser59. Catalysis depends on Ser59, which acts as the Phosphoserine intermediate. Residues His120, 149–150 (RD), Arg181, Arg187, 254–257 (RADR), and Lys331 each bind substrate. Mn(2+) contacts are provided by Asp398, His402, Asp439, His440, and His456.

This sequence belongs to the BPG-independent phosphoglycerate mutase family. The cofactor is Mn(2+).

It carries out the reaction (2R)-2-phosphoglycerate = (2R)-3-phosphoglycerate. It functions in the pathway carbohydrate degradation; glycolysis; pyruvate from D-glyceraldehyde 3-phosphate: step 3/5. Catalyzes the interconversion of 2-phosphoglycerate and 3-phosphoglycerate. The sequence is that of 2,3-bisphosphoglycerate-independent phosphoglycerate mutase from Halobacterium salinarum (strain ATCC 700922 / JCM 11081 / NRC-1) (Halobacterium halobium).